Here is a 550-residue protein sequence, read N- to C-terminus: DNA-directed RNA polymerase subunit alpha (550 aa).

The segment at 1–333 is alpha N-terminal domain (alpha-NTD); sequence MTIYPNLKKI…QENNLFRSEK (333 aa). The tract at residues 185–258 is insert; the sequence is TTLKKRNILL…TSLGHDTVSN (74 aa). Residues 378 to 550 form an alpha C-terminal domain (alpha-CTD) region; sequence FLNQSLGQNK…SLTFEYARKF (173 aa).

Belongs to the RNA polymerase alpha chain family. In plastids the minimal PEP RNA polymerase catalytic core is composed of four subunits: alpha, beta, beta', and beta''. When a (nuclear-encoded) sigma factor is associated with the core the holoenzyme is formed, which can initiate transcription.

Its subcellular location is the plastid. The protein resides in the chloroplast. It catalyses the reaction RNA(n) + a ribonucleoside 5'-triphosphate = RNA(n+1) + diphosphate. Functionally, DNA-dependent RNA polymerase catalyzes the transcription of DNA into RNA using the four ribonucleoside triphosphates as substrates. The polypeptide is DNA-directed RNA polymerase subunit alpha (rpoA) (Chlamydomonas reinhardtii (Chlamydomonas smithii)).